Reading from the N-terminus, the 121-residue chain is Basic phospholipase A2 3 (121 aa).

Cystine bridges form between Cys-26/Cys-115, Cys-28/Cys-44, Cys-43/Cys-95, Cys-49/Cys-121, Cys-50/Cys-88, Cys-57/Cys-81, and Cys-75/Cys-86. Residues Tyr-27, Gly-29, and Gly-31 each coordinate Ca(2+). His-47 is a catalytic residue. Asp-48 contributes to the Ca(2+) binding site. The active site involves Asp-89.

Belongs to the phospholipase A2 family. Group II subfamily. D49 sub-subfamily. It depends on Ca(2+) as a cofactor. Expressed by the venom gland.

It is found in the secreted. The catalysed reaction is a 1,2-diacyl-sn-glycero-3-phosphocholine + H2O = a 1-acyl-sn-glycero-3-phosphocholine + a fatty acid + H(+). Its function is as follows. PLA2 catalyzes the calcium-dependent hydrolysis of the 2-acyl groups in 3-sn-phosphoglycerides. This chain is Basic phospholipase A2 3, found in Daboia russelii (Russel's viper).